The sequence spans 204 residues: FMN-dependent NADH:quinone oxidoreductase (204 aa).

Residues S9, 15–17, and 97–100 each bind FMN; these read SVS and MYNF.

The protein belongs to the azoreductase type 1 family. In terms of assembly, homodimer. FMN is required as a cofactor.

The enzyme catalyses 2 a quinone + NADH + H(+) = 2 a 1,4-benzosemiquinone + NAD(+). It carries out the reaction N,N-dimethyl-1,4-phenylenediamine + anthranilate + 2 NAD(+) = 2-(4-dimethylaminophenyl)diazenylbenzoate + 2 NADH + 2 H(+). Quinone reductase that provides resistance to thiol-specific stress caused by electrophilic quinones. Functionally, also exhibits azoreductase activity. Catalyzes the reductive cleavage of the azo bond in aromatic azo compounds to the corresponding amines. In Methylobacterium radiotolerans (strain ATCC 27329 / DSM 1819 / JCM 2831 / NBRC 15690 / NCIMB 10815 / 0-1), this protein is FMN-dependent NADH:quinone oxidoreductase.